The chain runs to 179 residues: Large ribosomal subunit protein uL6 (179 aa).

Belongs to the universal ribosomal protein uL6 family. In terms of assembly, part of the 50S ribosomal subunit.

Its function is as follows. This protein binds to the 23S rRNA, and is important in its secondary structure. It is located near the subunit interface in the base of the L7/L12 stalk, and near the tRNA binding site of the peptidyltransferase center. The protein is Large ribosomal subunit protein uL6 of Crocosphaera subtropica (strain ATCC 51142 / BH68) (Cyanothece sp. (strain ATCC 51142)).